Reading from the N-terminus, the 425-residue chain is Serine--tRNA ligase (425 aa).

228 to 230 (TAE) provides a ligand contact to L-serine. Residue 259 to 261 (RSE) coordinates ATP. Residue Glu-282 coordinates L-serine. ATP is bound at residue 346 to 349 (EIAS). Ser-382 contacts L-serine.

It belongs to the class-II aminoacyl-tRNA synthetase family. Type-1 seryl-tRNA synthetase subfamily. As to quaternary structure, homodimer. The tRNA molecule binds across the dimer.

It localises to the cytoplasm. It catalyses the reaction tRNA(Ser) + L-serine + ATP = L-seryl-tRNA(Ser) + AMP + diphosphate + H(+). The enzyme catalyses tRNA(Sec) + L-serine + ATP = L-seryl-tRNA(Sec) + AMP + diphosphate + H(+). Its pathway is aminoacyl-tRNA biosynthesis; selenocysteinyl-tRNA(Sec) biosynthesis; L-seryl-tRNA(Sec) from L-serine and tRNA(Sec): step 1/1. Functionally, catalyzes the attachment of serine to tRNA(Ser). Is also able to aminoacylate tRNA(Sec) with serine, to form the misacylated tRNA L-seryl-tRNA(Sec), which will be further converted into selenocysteinyl-tRNA(Sec). The polypeptide is Serine--tRNA ligase (Rickettsia massiliae (strain Mtu5)).